Here is a 364-residue protein sequence, read N- to C-terminus: Uroporphyrinogen decarboxylase (364 aa).

Substrate-binding positions include 28–32 (RQAGR), phenylalanine 47, aspartate 78, tyrosine 158, threonine 213, and histidine 334.

It belongs to the uroporphyrinogen decarboxylase family. Homodimer.

Its subcellular location is the cytoplasm. The enzyme catalyses uroporphyrinogen III + 4 H(+) = coproporphyrinogen III + 4 CO2. The protein operates within porphyrin-containing compound metabolism; protoporphyrin-IX biosynthesis; coproporphyrinogen-III from 5-aminolevulinate: step 4/4. Functionally, catalyzes the decarboxylation of four acetate groups of uroporphyrinogen-III to yield coproporphyrinogen-III. This chain is Uroporphyrinogen decarboxylase, found in Ralstonia nicotianae (strain ATCC BAA-1114 / GMI1000) (Ralstonia solanacearum).